A 1068-amino-acid chain; its full sequence is WD repeat-containing protein on Y chromosome (1068 aa).

WD repeat units lie at residues 155–199 (DEVT…IRTA), 201–242 (SESI…RGPF), 322–361 (RIPL…EPSA), 365–404 (GHNG…LLQT), 455–494 (THAA…RKII), 507–546 (IIDI…VVRN), and 594–634 (FHTD…RRYS). Positions 657 to 687 (SKRLASRPTPGNHGLQMGRAGRSTVLNRPED) are disordered. WD repeat units lie at residues 746-785 (KTGD…VPET) and 829-868 (GHLK…LGTL). Residues 1026–1068 (SAINIKQPSRRRSDKTNDTRNVRTPRARDLIALEMSSSHASQS) form a disordered region. Residues 1039-1056 (DKTNDTRNVRTPRARDLI) show a composition bias toward basic and acidic residues.

This chain is WD repeat-containing protein on Y chromosome, found in Drosophila yakuba (Fruit fly).